A 590-amino-acid chain; its full sequence is Dystrobrevin-1 (590 aa).

The segment covering 1–10 (MLWSNGGGGP) has biased composition (gly residues). Residues 1–25 (MLWSNGGGGPREPSSAPSPDHHRAM) form a disordered region. The segment at 259–315 (YHPVVCDACQVRSFTGFRYKCQRCANYQLCQSCFWRGRTSQNHSNEHEMKEYSSYKS) adopts a ZZ-type zinc-finger fold. Cys-264, Cys-267, Cys-279, Cys-282, Cys-288, Cys-291, His-301, and His-305 together coordinate Zn(2+). Residues 434-508 (SMVGDERTLI…EHLMAQLNTG (75 aa)) adopt a coiled-coil conformation. Residues 468–590 (DGLAGLRDRK…DENGVTINGF (123 aa)) are essential for interaction with ctn-1. Residues 484–490 (MFEMQQR) form an essential for interaction with dys-1 region.

This sequence belongs to the dystrophin family. Dystrobrevin subfamily. Component of the dystrophin glycoprotein complex (DGC). Interacts with dystrophin (dys-1) and syntrophin (stn-1) to form the DGC. Interacts (via C-terminus) with ctn-1 (via N-terminus); the interaction is required for localization of the dystrophin complex and ctn-1 near dense bodies in muscle cells. From late embryogenesis to adulthood, expressed in neurons and muscles; particularly strong in the ventral nerve cord and in muscles of the body wall, head pharyngeal, and vulva; weaker in the intestinal muscle (at protein level).

It is found in the cytoplasm. In terms of biological role, plays a role in cholinergic transmission and as a functional partner of dystrophin (dys-1), necessary for muscle maintenance. Required for localization of ctn-1 near dense bodies in muscle cells. The polypeptide is Dystrobrevin-1 (Caenorhabditis elegans).